The following is a 513-amino-acid chain: Interferon alpha/beta receptor 2 (513 aa).

The signal sequence occupies residues 1–21 (MRSRCTVSAVGLLSLCLVVSA). Topologically, residues 22–242 (SLETITPSAF…GQESGLSESA (221 aa)) are extracellular. Intrachain disulfides connect cysteine 39–cysteine 123 and cysteine 85–cysteine 93. N-linked (GlcNAc...) asparagine glycans are attached at residues asparagine 42, asparagine 58, asparagine 65, asparagine 78, and asparagine 84. 3 N-linked (GlcNAc...) asparagine glycosylation sites follow: asparagine 149, asparagine 191, and asparagine 195. The cysteines at positions 210 and 227 are disulfide-linked. Residues 243–263 (IVGITTSCLVVMVFVSTIVML) traverse the membrane as a helical segment. The Cytoplasmic segment spans residues 264–513 (KRIGYICLKD…ADVGDGYIMR (250 aa)). The tract at residues 334-402 (GYTMHGLTGK…DPTGPYERRK (69 aa)) is disordered. Position 335 is a phosphotyrosine (tyrosine 335). Residues 344–354 (PLQQTSDTSAS) are compositionally biased toward polar residues. Low complexity predominate over residues 377–389 (GAEPELPTEAGAG). Serine 403 carries the post-translational modification Phosphoserine. The segment at 421–444 (GDNIIFNVNLNSVFLRVLHDEDAS) is mediates interaction with STAT2 (and required for the recruitment of USP18). Serine 448 and serine 465 each carry phosphoserine. The interval 458–513 (EGPQRTESDLRIAGGDRTQPPLPSLPSQDLWTEDGSSEKSDTSDSDADVGDGYIMR) is disordered. The residue at position 510 (tyrosine 510) is a Phosphotyrosine.

The protein belongs to the type II cytokine receptor family. In terms of assembly, heterodimer with IFNAR1; forming the receptor for type I interferon. Interacts with the transcriptional factors STAT1 and STAT2. Interacts with JAK1. Interacts with USP18; indirectly via STAT2, it negatively regulates the assembly of the ternary interferon-IFNAR1-IFNAR2 complex and therefore type I interferon signaling. Post-translationally, phosphorylated on tyrosine residues upon interferon binding. Phosphorylation at Tyr-335 or Tyr-510 are sufficient to mediate interferon dependent activation of STAT1, STAT2 and STAT3 leading to antiproliferative effects on many different cell types. Widely expressed. Detected in liver, testis, kidney, salivary gland, thymus, brain, lung and placenta. Isoform 1, isoform 2 and isoform 3 are expressed in brain.

The protein localises to the cell membrane. The protein resides in the secreted. In terms of biological role, together with IFNAR1, forms the heterodimeric receptor for type I interferons (including interferons alpha, beta, epsilon, omega and kappa). Type I interferon binding activates the JAK-STAT signaling cascade, resulting in transcriptional activation or repression of interferon-regulated genes that encode the effectors of the interferon response. Mechanistically, type I interferon-binding brings the IFNAR1 and IFNAR2 subunits into close proximity with one another, driving their associated Janus kinases (JAKs) (TYK2 bound to IFNAR1 and JAK1 bound to IFNAR2) to cross-phosphorylate one another. The activated kinases phosphorylate specific tyrosine residues on the intracellular domains of IFNAR1 and IFNAR2, forming docking sites for the STAT transcription factors (STAT1, STAT2 and STAT). STAT proteins are then phosphorylated by the JAKs, promoting their translocation into the nucleus to regulate expression of interferon-regulated genes. May be potent inhibitors of type I IFN receptor activity. The sequence is that of Interferon alpha/beta receptor 2 (Ifnar2) from Mus musculus (Mouse).